The primary structure comprises 538 residues: Putative cysteine ligase BshC (538 aa).

Residues 460–484 (KINEQIELLERMLKRNVEKKHEVEL) are a coiled coil.

It belongs to the BshC family.

Functionally, involved in bacillithiol (BSH) biosynthesis. May catalyze the last step of the pathway, the addition of cysteine to glucosamine malate (GlcN-Mal) to generate BSH. The chain is Putative cysteine ligase BshC from Bacillus anthracis (strain A0248).